A 342-amino-acid polypeptide reads, in one-letter code: Non-homologous end-joining protein 1 (342 aa).

The next 2 helical transmembrane spans lie at 27 to 47 and 129 to 149; these read LLLF…LVSL and MFYM…NLST. The segment at 173-342 is interaction with LIF1; that stretch reads LRDLDGGSKV…RKFGKVRIKN (170 aa). The segment at 270–342 is disordered; the sequence is ADPTNEARPN…RKFGKVRIKN (73 aa). Positions 286–296 are enriched in basic and acidic residues; that stretch reads PKTDFKPKSRE. Positions 297–312 are enriched in polar residues; that stretch reads SSTSSQLRLENFSESE. Residues 331 to 342 are compositionally biased toward basic residues; it reads KKRKFGKVRIKN.

The protein belongs to the XRCC4-XLF family. XLF subfamily. Interacts (via C-terminus) with LIF1 (via N-terminus); the interaction is direct. Interacts with DNL4.

The protein localises to the cytoplasm. Its subcellular location is the nucleus membrane. Its function is as follows. Involved in non-homologous end joining (NHEJ). Facilitates the transport of LIF1 into the nucleus, where it can interact with DNA ligase DNL4 to repair double-strand breaks (DSB). Mediates mating-type regulation of NHEJ. Prevents chromosome circularisation by NHEJ in absence of telomerase. The sequence is that of Non-homologous end-joining protein 1 (NEJ1) from Saccharomyces cerevisiae (strain ATCC 204508 / S288c) (Baker's yeast).